A 258-amino-acid polypeptide reads, in one-letter code: uncharacterized protein (258 aa).

6 consecutive transmembrane segments (helical) span residues leucine 21–tyrosine 41, leucine 73–alanine 93, tryptophan 119–tyrosine 139, phenylalanine 153–alanine 173, glycine 182–phenylalanine 202, and phenylalanine 229–valine 249.

It localises to the cell membrane. This is an uncharacterized protein from Bacillus subtilis (strain 168).